The sequence spans 456 residues: Bifunctional protein GlmU (456 aa).

The interval 1 to 229 (MLNSAMSVVI…ISETDGVNNR (229 aa)) is pyrophosphorylase. Residues 11 to 14 (LAAG), K25, Q76, 81 to 82 (GT), 103 to 105 (YGD), G140, E154, N169, and N227 contribute to the UDP-N-acetyl-alpha-D-glucosamine site. D105 serves as a coordination point for Mg(2+). N227 is a binding site for Mg(2+). A linker region spans residues 230–250 (LQLSRLERIYQAEQAEKLLLS). The segment at 251–456 (GVMLRDPARF…QGWQRPVKKK (206 aa)) is N-acetyltransferase. 2 residues coordinate UDP-N-acetyl-alpha-D-glucosamine: R333 and K351. H363 serves as the catalytic Proton acceptor. Positions 366 and 377 each coordinate UDP-N-acetyl-alpha-D-glucosamine. Acetyl-CoA-binding positions include A380, 386 to 387 (NY), S405, A423, and R440.

It in the N-terminal section; belongs to the N-acetylglucosamine-1-phosphate uridyltransferase family. This sequence in the C-terminal section; belongs to the transferase hexapeptide repeat family. As to quaternary structure, homotrimer. The cofactor is Mg(2+).

The protein localises to the cytoplasm. It carries out the reaction alpha-D-glucosamine 1-phosphate + acetyl-CoA = N-acetyl-alpha-D-glucosamine 1-phosphate + CoA + H(+). The catalysed reaction is N-acetyl-alpha-D-glucosamine 1-phosphate + UTP + H(+) = UDP-N-acetyl-alpha-D-glucosamine + diphosphate. The protein operates within nucleotide-sugar biosynthesis; UDP-N-acetyl-alpha-D-glucosamine biosynthesis; N-acetyl-alpha-D-glucosamine 1-phosphate from alpha-D-glucosamine 6-phosphate (route II): step 2/2. It participates in nucleotide-sugar biosynthesis; UDP-N-acetyl-alpha-D-glucosamine biosynthesis; UDP-N-acetyl-alpha-D-glucosamine from N-acetyl-alpha-D-glucosamine 1-phosphate: step 1/1. Its pathway is bacterial outer membrane biogenesis; LPS lipid A biosynthesis. Catalyzes the last two sequential reactions in the de novo biosynthetic pathway for UDP-N-acetylglucosamine (UDP-GlcNAc). The C-terminal domain catalyzes the transfer of acetyl group from acetyl coenzyme A to glucosamine-1-phosphate (GlcN-1-P) to produce N-acetylglucosamine-1-phosphate (GlcNAc-1-P), which is converted into UDP-GlcNAc by the transfer of uridine 5-monophosphate (from uridine 5-triphosphate), a reaction catalyzed by the N-terminal domain. In Salmonella choleraesuis (strain SC-B67), this protein is Bifunctional protein GlmU.